We begin with the raw amino-acid sequence, 237 residues long: Demethylmenaquinone methyltransferase (237 aa).

S-adenosyl-L-methionine is bound by residues T58, D79, and 106 to 107 (NA).

This sequence belongs to the class I-like SAM-binding methyltransferase superfamily. MenG/UbiE family.

It catalyses the reaction a 2-demethylmenaquinol + S-adenosyl-L-methionine = a menaquinol + S-adenosyl-L-homocysteine + H(+). The protein operates within quinol/quinone metabolism; menaquinone biosynthesis; menaquinol from 1,4-dihydroxy-2-naphthoate: step 2/2. Its function is as follows. Methyltransferase required for the conversion of demethylmenaquinol (DMKH2) to menaquinol (MKH2). The protein is Demethylmenaquinone methyltransferase of Listeria innocua serovar 6a (strain ATCC BAA-680 / CLIP 11262).